Reading from the N-terminus, the 222-residue chain is MLITFEGIDGAGKSTQVAKLVAYLKQQSTPLLSLREPGGTPTAESIRSLLLDNRKSITPIAELLLFSASRAELVETLIRPALAEGKTVILDRFFDSTTAYQGHGRGISLEQLHSIIALSTGDLLPDVTFYLDLEPEEALRRAFSRSGLPLDFAAQSNESDRMEQAGIAFYHKVRNGYLTLMQQHPSRFVALDATQPPDTLHQHIIAEVETRLKLHISPLVAP.

7-14 serves as a coordination point for ATP; the sequence is GIDGAGKS.

The protein belongs to the thymidylate kinase family.

It carries out the reaction dTMP + ATP = dTDP + ADP. Functionally, phosphorylation of dTMP to form dTDP in both de novo and salvage pathways of dTTP synthesis. The sequence is that of Thymidylate kinase from Chlorobium chlorochromatii (strain CaD3).